A 273-amino-acid chain; its full sequence is Undecaprenyl-diphosphatase (273 aa).

7 helical membrane-spanning segments follow: residues 6 to 26, 45 to 65, 90 to 110, 116 to 136, 190 to 210, 222 to 242, and 252 to 272; these read SLLI…LPVS, AKTF…VMFW, LTLI…LVFH, LFNP…LIAA, YAAS…ATVL, ADIP…LIAI, and ISFI…YVVF.

Belongs to the UppP family.

The protein localises to the cell inner membrane. The catalysed reaction is di-trans,octa-cis-undecaprenyl diphosphate + H2O = di-trans,octa-cis-undecaprenyl phosphate + phosphate + H(+). Catalyzes the dephosphorylation of undecaprenyl diphosphate (UPP). Confers resistance to bacitracin. This is Undecaprenyl-diphosphatase from Salmonella arizonae (strain ATCC BAA-731 / CDC346-86 / RSK2980).